The following is a 317-amino-acid chain: Acetyl-coenzyme A carboxylase carboxyl transferase subunit alpha (317 aa).

In terms of domain architecture, CoA carboxyltransferase C-terminal spans 39–293 (KLEAKAQKAL…KEAVVEALGA (255 aa)).

Belongs to the AccA family. As to quaternary structure, acetyl-CoA carboxylase is a heterohexamer composed of biotin carboxyl carrier protein (AccB), biotin carboxylase (AccC) and two subunits each of ACCase subunit alpha (AccA) and ACCase subunit beta (AccD).

It localises to the cytoplasm. The catalysed reaction is N(6)-carboxybiotinyl-L-lysyl-[protein] + acetyl-CoA = N(6)-biotinyl-L-lysyl-[protein] + malonyl-CoA. Its pathway is lipid metabolism; malonyl-CoA biosynthesis; malonyl-CoA from acetyl-CoA: step 1/1. Component of the acetyl coenzyme A carboxylase (ACC) complex. First, biotin carboxylase catalyzes the carboxylation of biotin on its carrier protein (BCCP) and then the CO(2) group is transferred by the carboxyltransferase to acetyl-CoA to form malonyl-CoA. This chain is Acetyl-coenzyme A carboxylase carboxyl transferase subunit alpha, found in Beijerinckia indica subsp. indica (strain ATCC 9039 / DSM 1715 / NCIMB 8712).